The following is a 173-amino-acid chain: ATP synthase subunit b (173 aa).

Residues 15 to 35 form a helical membrane-spanning segment; sequence GVEWGTVIVQVLTFIVLLALL.

This sequence belongs to the ATPase B chain family. F-type ATPases have 2 components, F(1) - the catalytic core - and F(0) - the membrane proton channel. F(1) has five subunits: alpha(3), beta(3), gamma(1), delta(1), epsilon(1). F(0) has three main subunits: a(1), b(2) and c(10-14). The alpha and beta chains form an alternating ring which encloses part of the gamma chain. F(1) is attached to F(0) by a central stalk formed by the gamma and epsilon chains, while a peripheral stalk is formed by the delta and b chains.

The protein resides in the cell membrane. F(1)F(0) ATP synthase produces ATP from ADP in the presence of a proton or sodium gradient. F-type ATPases consist of two structural domains, F(1) containing the extramembraneous catalytic core and F(0) containing the membrane proton channel, linked together by a central stalk and a peripheral stalk. During catalysis, ATP synthesis in the catalytic domain of F(1) is coupled via a rotary mechanism of the central stalk subunits to proton translocation. In terms of biological role, component of the F(0) channel, it forms part of the peripheral stalk, linking F(1) to F(0). This Staphylococcus aureus (strain MRSA252) protein is ATP synthase subunit b.